A 310-amino-acid polypeptide reads, in one-letter code: Olfactory receptor 5P56 (310 aa).

The Extracellular segment spans residues 1–25; it reads MEAQNHTTVKEFILLGLTENSTLRV. Residues asparagine 5 and asparagine 20 are each glycosylated (N-linked (GlcNAc...) asparagine). A helical membrane pass occupies residues 26–46; the sequence is ILFMIFLGIYTVTLVGNFSII. At 47–54 the chain is on the cytoplasmic side; that stretch reads SLIRSCPQ. The helical transmembrane segment at 55-75 threads the bilayer; it reads LHTPMYLFLSHLALVDIGFST. The Extracellular portion of the chain corresponds to 76-99; it reads SITPIMLTGFLGHTVTLSVAACVA. A disulfide bridge links cysteine 97 with cysteine 189. Residues 100–120 traverse the membrane as a helical segment; sequence QFCIAVTFGTVECFLLAVMAY. Residues 121-133 are Cytoplasmic-facing; it reads DRYVAICSPLLYS. Residues 134–154 form a helical membrane-spanning segment; it reads THMSPRICFLLVGASYVGGCV. Residues 155–196 lie on the Extracellular side of the membrane; it reads NSGTFTSCLLILSFCGPNQIDHFFCDFPAVLKLSCSDVSIIG. Residues 197-217 traverse the membrane as a helical segment; the sequence is IIPSISAGSIIVITVFVIAVS. At 218–237 the chain is on the cytoplasmic side; it reads YTYILITILNMRSTEGRHKA. Residues 238 to 258 form a helical membrane-spanning segment; the sequence is FSTCTSHLTAVTLYYGTITFI. Residues 259–271 are Extracellular-facing; sequence YVMPKSNYSTAQN. An N-linked (GlcNAc...) asparagine glycan is attached at asparagine 265. A helical membrane pass occupies residues 272–292; the sequence is KILSVFYTVVIPMLNPLIYSL. Over 293 to 310 the chain is Cytoplasmic; the sequence is RNRDVKEALRKAIIRIFP.

This sequence belongs to the G-protein coupled receptor 1 family.

It localises to the cell membrane. Potential odorant receptor. The chain is Olfactory receptor 5P56 from Mus musculus (Mouse).